The chain runs to 912 residues: Receptor protein kinase WSS1 (912 aa).

A signal peptide spans 1-27; that stretch reads MGRDARRLPLLPFLLLLLAAAAGVAES. Topologically, residues 28–477 are extracellular; sequence ATDAEAIHDL…AGGGKSKPNT (450 aa). LRR repeat units follow at residues 64–88, 89–111, and 112–134; these read AGKV…LSSL, TSLT…LARM, and GSLA…FLHG. N-linked (GlcNAc...) asparagine glycosylation is found at asparagine 159, asparagine 170, asparagine 196, asparagine 256, asparagine 286, asparagine 371, asparagine 376, asparagine 387, and asparagine 400. LRR repeat units follow at residues 184-208, 235-261, 281-303, 364-388, 389-411, and 413-438; these read LVSL…LSSL, MKSL…TQLE, LMSL…AFAA, SSDV…LANL, TRLA…VLTT, and PSLT…SVNV. A disordered region spans residues 448-472; that stretch reads SSGSSGGGGGSDGDSSSSDSAGGGK. A helical membrane pass occupies residues 478–498; it reads GMIIGIIVAVIILFACIALLV. The Cytoplasmic segment spans residues 499 to 912; it reads HHRKKKNVEK…SFNVPRKYNG (414 aa). In terms of domain architecture, Protein kinase spans 580 to 859; it reads FSEDCILGRG…HCVNRLSSLV (280 aa). Residues 586–594 and lysine 607 each bind ATP; that span reads LGRGGFGVV. Residue aspartate 708 is the Proton acceptor of the active site.

It belongs to the protein kinase superfamily. Ser/Thr protein kinase family. Mn(2+) serves as cofactor. As to expression, expressed in young and mature leaves.

Its subcellular location is the cell membrane. The enzyme catalyses L-seryl-[protein] + ATP = O-phospho-L-seryl-[protein] + ADP + H(+). It carries out the reaction L-threonyl-[protein] + ATP = O-phospho-L-threonyl-[protein] + ADP + H(+). Transmembrane kinase receptor involved in the regulation of reactive oxygen species (ROS) homeostasis, chloroplast development and leaf senescence. The chain is Receptor protein kinase WSS1 from Oryza sativa subsp. japonica (Rice).